We begin with the raw amino-acid sequence, 228 residues long: FtsZ-localized protein A (228 aa).

One can recognise a GST N-terminal domain in the interval 3 to 85; that stretch reads VERTLHHFPL…HIEETETEPP (83 aa). One can recognise a GST C-terminal domain in the interval 90 to 223; it reads DPAERAEARR…WPGLAPAAHY (134 aa).

It belongs to the GST superfamily. In terms of assembly, homodimer. Interacts with FtsZ filaments. Probably interacts with the GTPase domain of FtsZ.

The protein localises to the cytoplasm. In terms of biological role, essential cell division protein that must bind to FtsZ for division to occur. Critical coordinator of envelope constriction through its interaction with FtsZ. Promotes the formation of highly curved FtsZ filaments, reduces the GTPase activity of FtsZ and stabilizes FtsZ polymers. May regulate FtsZ function by modulating its superstructure. Does not bind to glutathione. The chain is FtsZ-localized protein A from Caulobacter vibrioides (strain NA1000 / CB15N) (Caulobacter crescentus).